A 145-amino-acid polypeptide reads, in one-letter code: Putative type I specificity subunit S.MpnORF289P C-terminus (145 aa).

The protein belongs to the type-I restriction system S methylase family. As to quaternary structure, the methyltransferase is composed of M and S polypeptides.

Its function is as follows. The C-terminal section of a specificity (S) subunit of a type I methyltransferase (MTase); this subunit dictates DNA sequence specificity. The single R subunit has multiple frameshifts and is probably not expressed. In Mycoplasma pneumoniae (strain ATCC 29342 / M129 / Subtype 1) (Mycoplasmoides pneumoniae), this protein is Putative type I specificity subunit S.MpnORF289P C-terminus.